Consider the following 604-residue polypeptide: Pescadillo homolog (604 aa).

Residues 349-448 enclose the BRCT domain; it reads PTSTLFSKFI…ELLPVNKYAP (100 aa). Disordered stretches follow at residues 452-562 and 579-604; these read LPPH…MTNK and TRTQ…LSKK. Coiled coils occupy residues 468-522 and 573-604; these read EAEK…LEAA and GIDK…LSKK. Residues 476 to 510 are compositionally biased toward acidic residues; sequence ENAEEEEEDEVDEDDEDADEDEEDEEEEDEEEDED. Over residues 593-604 the composition is skewed to basic and acidic residues; it reads KTKAQLDKLSKK.

Belongs to the pescadillo family. In terms of assembly, component of the NOP7 complex, composed of ERB1, NOP7 and YTM1. The complex is held together by ERB1, which interacts with NOP7 via its N-terminal domain and with YTM1 via a high-affinity interaction between the seven-bladed beta-propeller domains of the 2 proteins. The NOP7 complex associates with the 66S pre-ribosome.

It is found in the nucleus. The protein localises to the nucleolus. The protein resides in the nucleoplasm. Its function is as follows. Component of the NOP7 complex, which is required for maturation of the 25S and 5.8S ribosomal RNAs and formation of the 60S ribosome. This Scheffersomyces stipitis (strain ATCC 58785 / CBS 6054 / NBRC 10063 / NRRL Y-11545) (Yeast) protein is Pescadillo homolog.